The chain runs to 505 residues: Lysine--tRNA ligase (505 aa).

Mg(2+) is bound by residues E403 and E410.

It belongs to the class-II aminoacyl-tRNA synthetase family. In terms of assembly, homodimer. Mg(2+) is required as a cofactor.

Its subcellular location is the cytoplasm. The enzyme catalyses tRNA(Lys) + L-lysine + ATP = L-lysyl-tRNA(Lys) + AMP + diphosphate. The polypeptide is Lysine--tRNA ligase (Methanospirillum hungatei JF-1 (strain ATCC 27890 / DSM 864 / NBRC 100397 / JF-1)).